Consider the following 628-residue polypeptide: Netrin-4 (628 aa).

An N-terminal signal peptide occupies residues 1–18 (MGSCARLLLLWGCTVVAA). In terms of domain architecture, Laminin N-terminal spans 30–261 (CEKACNPRMG…AIYDFIVKGS (232 aa)). Residues asparagine 56 and asparagine 163 are each glycosylated (N-linked (GlcNAc...) asparagine). 12 disulfide bridges follow: cysteine 262-cysteine 271, cysteine 264-cysteine 293, cysteine 295-cysteine 304, cysteine 307-cysteine 329, cysteine 332-cysteine 341, cysteine 334-cysteine 359, cysteine 362-cysteine 371, cysteine 374-cysteine 392, cysteine 395-cysteine 413, cysteine 397-cysteine 420, cysteine 422-cysteine 431, and cysteine 434-cysteine 446. 3 consecutive Laminin EGF-like domains span residues 262 to 331 (CFCN…ECRT), 332 to 394 (CKCN…ACKP), and 395 to 448 (CSCH…GCRP). The N-linked (GlcNAc...) asparagine glycan is linked to asparagine 353. Asparagine 483 carries an N-linked (GlcNAc...) asparagine glycan. Intrachain disulfides connect cysteine 506–cysteine 576 and cysteine 520–cysteine 627. The NTR domain occupies 506-627 (CECKEQTLGN…KVMDILKREC (122 aa)).

May form a homodimer.

It is found in the secreted. The protein localises to the extracellular space. The protein resides in the extracellular matrix. Functionally, may play an important role in neural, kidney and vascular development. This is Netrin-4 (NTN4) from Pongo abelii (Sumatran orangutan).